The sequence spans 312 residues: Ribosomal RNA small subunit methyltransferase H (312 aa).

S-adenosyl-L-methionine contacts are provided by residues 33–35 (SGH), D53, F80, D101, and Q108.

Belongs to the methyltransferase superfamily. RsmH family.

It is found in the cytoplasm. The catalysed reaction is cytidine(1402) in 16S rRNA + S-adenosyl-L-methionine = N(4)-methylcytidine(1402) in 16S rRNA + S-adenosyl-L-homocysteine + H(+). In terms of biological role, specifically methylates the N4 position of cytidine in position 1402 (C1402) of 16S rRNA. This chain is Ribosomal RNA small subunit methyltransferase H, found in Desulforapulum autotrophicum (strain ATCC 43914 / DSM 3382 / VKM B-1955 / HRM2) (Desulfobacterium autotrophicum).